The primary structure comprises 171 residues: 3-hydroxydecanoyl-[acyl-carrier-protein] dehydratase (171 aa).

Histidine 70 is a catalytic residue.

This sequence belongs to the thioester dehydratase family. FabA subfamily. As to quaternary structure, homodimer.

It is found in the cytoplasm. It catalyses the reaction a (3R)-hydroxyacyl-[ACP] = a (2E)-enoyl-[ACP] + H2O. The catalysed reaction is (3R)-hydroxydecanoyl-[ACP] = (2E)-decenoyl-[ACP] + H2O. It carries out the reaction (2E)-decenoyl-[ACP] = (3Z)-decenoyl-[ACP]. It participates in lipid metabolism; fatty acid biosynthesis. Its function is as follows. Necessary for the introduction of cis unsaturation into fatty acids. Catalyzes the dehydration of (3R)-3-hydroxydecanoyl-ACP to E-(2)-decenoyl-ACP and then its isomerization to Z-(3)-decenoyl-ACP. Can catalyze the dehydratase reaction for beta-hydroxyacyl-ACPs with saturated chain lengths up to 16:0, being most active on intermediate chain length. The protein is 3-hydroxydecanoyl-[acyl-carrier-protein] dehydratase of Pseudomonas aeruginosa (strain LESB58).